We begin with the raw amino-acid sequence, 347 residues long: NADH-ubiquinone oxidoreductase chain 2 (347 aa).

The next 11 membrane-spanning stretches (helical) occupy residues 3–23 (PIIF…VMIS), 25–45 (HWLR…PIMM), 66–86 (ASML…QWTV), 96–116 (MLMT…FWVP), 122–142 (IPLS…MSVL), 145–165 (ILPS…IMIG), 178–198 (IMAY…PYNP), 200–220 (MMLL…LLFM), 237–257 (MPIM…LPPL), 274–294 (NSII…YFYM), and 325–345 (LLPT…ILSI).

The protein belongs to the complex I subunit 2 family. In terms of assembly, core subunit of respiratory chain NADH dehydrogenase (Complex I) which is composed of 45 different subunits. Interacts with TMEM242.

It localises to the mitochondrion inner membrane. The catalysed reaction is a ubiquinone + NADH + 5 H(+)(in) = a ubiquinol + NAD(+) + 4 H(+)(out). Its function is as follows. Core subunit of the mitochondrial membrane respiratory chain NADH dehydrogenase (Complex I) which catalyzes electron transfer from NADH through the respiratory chain, using ubiquinone as an electron acceptor. Essential for the catalytic activity and assembly of complex I. In Capra hircus (Goat), this protein is NADH-ubiquinone oxidoreductase chain 2.